Reading from the N-terminus, the 948-residue chain is Phosphatidylinositol-glycan-specific phospholipase D (948 aa).

The signal sequence occupies residues 1-24 (MKNKIILLWLLLIVILCTISNVKG). N-linked (GlcNAc...) asparagine glycans are attached at residues N39, N78, N148, N300, N433, N452, N506, and N535. 4 FG-GAP repeats span residues 451-512 (TNFT…SVTI), 526-588 (QVAT…NPAG), 596-656 (LPSI…RISG), and 663-724 (DADY…LNSF). N-linked (GlcNAc...) asparagine glycosylation is found at N749 and N788. FG-GAP repeat units follow at residues 799 to 861 (NLLL…LTND) and 895 to 948 (SSGG…NIFQ).

The protein belongs to the GPLD1 family. Ca(2+) is required as a cofactor.

The protein resides in the secreted. It catalyses the reaction a 6-(alpha-D-glucosaminyl)-1-(1,2-diacyl-sn-glycero-3-phospho)-1D-myo-inositol + H2O = 6-(alpha-D-glucosaminyl)-1D-myo-inositol + a 1,2-diacyl-sn-glycero-3-phosphate + H(+). In terms of biological role, hydrolyzes the inositol phosphate linkage in proteins anchored by phosphatidylinositol glycans (GPI-anchor) thus releasing these proteins from the membrane. May also cleave GPI anchor intermediates intracellularly. In Dictyostelium discoideum (Social amoeba), this protein is Phosphatidylinositol-glycan-specific phospholipase D (pldG).